The following is a 648-amino-acid chain: Cell surface glycoprotein MUC18 (648 aa).

The signal sequence occupies residues 1-23; that stretch reads MGLPRLVCAFLFAACCCCRSATG. Ig-like V-type domains lie at 24–131 and 141–244; these read VPGE…HYVQ and PTIQ…KEVT. Topologically, residues 24–560 are extracellular; it reads VPGEEKQPTP…EKKLPQQESK (537 aa). Cystine bridges form between cysteine 50/cysteine 118, cysteine 163/cysteine 225, cysteine 274/cysteine 322, cysteine 367/cysteine 409, and cysteine 454/cysteine 501. N-linked (GlcNAc...) asparagine glycosylation is present at asparagine 58. Ig-like C2-type domains lie at 246–332, 337–426, and 432–512; these read PVLY…TTVM, PLEL…RRVS, and SPWM…SNTT. The tract at residues 282 to 304 is disordered; the sequence is PHFTINKKNPSTEEMEEESTDEN. A glycan (N-linked (GlcNAc...) asparagine) is linked at asparagine 510. Positions 527–549 are enriched in polar residues; it reads DSSQTTGLSTPTVSPHSRANSTS. The interval 527-554 is disordered; that stretch reads DSSQTTGLSTPTVSPHSRANSTSTEKKL. The helical transmembrane segment at 561 to 581 threads the bilayer; it reads GVVIVAVIVCTLVLAVLGATL. Over 582–648 the chain is Cytoplasmic; that stretch reads YYFYKKGKLP…QGEKYIDLRH (67 aa). Phosphoserine occurs at positions 608 and 616. The interval 626–648 is disordered; that stretch reads LQGSNGDKRAPGDQGEKYIDLRH. The span at 631–648 shows a compositional bias: basic and acidic residues; the sequence is GDKRAPGDQGEKYIDLRH.

As to expression, detected in lung, uterus and placenta (at protein level). Detected in heart, lung, kidney, adrenal gland, intestine, testis, skeletal muscle and aorta. Detected at low levels in adult brain, in particular in brain stem and spinal cord, but also in hippocampus, olfactory bulb and striatum (at protein level).

Its subcellular location is the cell membrane. It is found in the perikaryon. In terms of biological role, plays a role in cell adhesion, and in cohesion of the endothelial monolayer at intercellular junctions in vascular tissue. Its expression may allow melanoma cells to interact with cellular elements of the vascular system, thereby enhancing hematogeneous tumor spread. Could be an adhesion molecule active in neural crest cells during embryonic development. Acts as a surface receptor that triggers tyrosine phosphorylation of FYN and PTK2/FAK1, and a transient increase in the intracellular calcium concentration. The polypeptide is Cell surface glycoprotein MUC18 (Mcam) (Rattus norvegicus (Rat)).